Consider the following 388-residue polypeptide: Succinate--CoA ligase [ADP-forming] subunit beta (388 aa).

An ATP-grasp domain is found at 9–245; sequence KELLASYGLP…KSQENERELK (237 aa). Residues K46, 53–55, E100, Y103, and E108 contribute to the ATP site; that span reads GRG. Residues N200 and D214 each contribute to the Mg(2+) site. Residues N265 and 322 to 324 contribute to the substrate site; that span reads GIV.

The protein belongs to the succinate/malate CoA ligase beta subunit family. As to quaternary structure, heterotetramer of two alpha and two beta subunits. It depends on Mg(2+) as a cofactor.

The catalysed reaction is succinate + ATP + CoA = succinyl-CoA + ADP + phosphate. It carries out the reaction GTP + succinate + CoA = succinyl-CoA + GDP + phosphate. The protein operates within carbohydrate metabolism; tricarboxylic acid cycle; succinate from succinyl-CoA (ligase route): step 1/1. Functionally, succinyl-CoA synthetase functions in the citric acid cycle (TCA), coupling the hydrolysis of succinyl-CoA to the synthesis of either ATP or GTP and thus represents the only step of substrate-level phosphorylation in the TCA. The beta subunit provides nucleotide specificity of the enzyme and binds the substrate succinate, while the binding sites for coenzyme A and phosphate are found in the alpha subunit. The chain is Succinate--CoA ligase [ADP-forming] subunit beta from Neisseria gonorrhoeae (strain NCCP11945).